The primary structure comprises 892 residues: Histone deacetylase 4 (892 aa).

Residues 145-225 form a disordered region; that stretch reads NGNLSNLSVP…MSNVNGHDNS (81 aa). Composition is skewed to polar residues over residues 171–192 and 208–222; these read SAPT…ISQL and ESNS…VNGH. The interval 481 to 822 is histone deacetylase; the sequence is STGLGYDPLM…VQALIGESDD (342 aa). Residue His628 is part of the active site.

The protein belongs to the histone deacetylase family. HD type 2 subfamily.

It is found in the nucleus. It catalyses the reaction N(6)-acetyl-L-lysyl-[histone] + H2O = L-lysyl-[histone] + acetate. Responsible for the deacetylation of lysine residues on the N-terminal part of the core histones (H2A, H2B, H3 and H4). Histone deacetylation gives a tag for epigenetic repression and plays an important role in transcriptional regulation, cell cycle progression and developmental events. Histone deacetylases act via the formation of large multiprotein complexes. The protein is Histone deacetylase 4 (hda-4) of Caenorhabditis briggsae.